A 154-amino-acid chain; its full sequence is Ribosome maturation factor RimP (154 aa).

Belongs to the RimP family.

Its subcellular location is the cytoplasm. Required for maturation of 30S ribosomal subunits. The protein is Ribosome maturation factor RimP of Prochlorococcus marinus (strain MIT 9303).